Consider the following 889-residue polypeptide: Alanine--tRNA ligase (889 aa).

Zn(2+)-binding residues include H587, H591, C691, and H695. Disordered regions lie at residues 734–760 (QQEQESKRKAEEAVAKEQLEKQREENK) and 866–889 (AQGGGKDTSKKDEAISKAKSMILG). The span at 872–881 (DTSKKDEAIS) shows a compositional bias: basic and acidic residues.

It belongs to the class-II aminoacyl-tRNA synthetase family. The cofactor is Zn(2+).

The protein localises to the cytoplasm. It catalyses the reaction tRNA(Ala) + L-alanine + ATP = L-alanyl-tRNA(Ala) + AMP + diphosphate. Catalyzes the attachment of alanine to tRNA(Ala) in a two-step reaction: alanine is first activated by ATP to form Ala-AMP and then transferred to the acceptor end of tRNA(Ala). Also edits incorrectly charged Ser-tRNA(Ala) and Gly-tRNA(Ala) via its editing domain. This chain is Alanine--tRNA ligase, found in Nitrosopumilus maritimus (strain SCM1).